We begin with the raw amino-acid sequence, 210 residues long: V-type ATP synthase subunit D (210 aa).

This sequence belongs to the V-ATPase D subunit family.

Produces ATP from ADP in the presence of a proton gradient across the membrane. The sequence is that of V-type ATP synthase subunit D from Coprothermobacter proteolyticus (strain ATCC 35245 / DSM 5265 / OCM 4 / BT).